Reading from the N-terminus, the 220-residue chain is Deoxyribose-phosphate aldolase (220 aa).

Asp89 functions as the Proton donor/acceptor in the catalytic mechanism. Lys152 functions as the Schiff-base intermediate with acetaldehyde in the catalytic mechanism. The Proton donor/acceptor role is filled by Lys181.

The protein belongs to the DeoC/FbaB aldolase family. DeoC type 1 subfamily.

It localises to the cytoplasm. The catalysed reaction is 2-deoxy-D-ribose 5-phosphate = D-glyceraldehyde 3-phosphate + acetaldehyde. Its pathway is carbohydrate degradation; 2-deoxy-D-ribose 1-phosphate degradation; D-glyceraldehyde 3-phosphate and acetaldehyde from 2-deoxy-alpha-D-ribose 1-phosphate: step 2/2. In terms of biological role, catalyzes a reversible aldol reaction between acetaldehyde and D-glyceraldehyde 3-phosphate to generate 2-deoxy-D-ribose 5-phosphate. The protein is Deoxyribose-phosphate aldolase of Enterococcus faecalis (strain ATCC 700802 / V583).